A 379-amino-acid polypeptide reads, in one-letter code: Cytochrome b (379 aa).

4 helical membrane passes run 32–52 (YGSLLGLVLVIQLITGIVLAT), 76–98 (WLLRLVHSTGASFFFLFIYLHIG), 111–131 (VWNIGVLIYLILMGTAFLGYV), and 177–197 (FFALHYLLPFVVTALVILHIF). Residues His-82 and His-96 each contribute to the heme b site. Residues His-181 and His-195 each contribute to the heme b site. His-200 contacts a ubiquinone. The next 4 membrane-spanning stretches (helical) occupy residues 223-243 (YSVKDLYVYFVFFFVFMVFTL), 287-304 (LGGVVGLLLAVLVLFLFS), 320-340 (LARLLYWSLVSNFFLLTWLGS), and 348-367 (NEVALVATVTYFTFMLTMCA).

The protein belongs to the cytochrome b family. As to quaternary structure, the main subunits of complex b-c1 are: cytochrome b, cytochrome c1 and the Rieske protein. The cofactor is heme b.

It localises to the mitochondrion inner membrane. Functionally, component of the ubiquinol-cytochrome c reductase complex (complex III or cytochrome b-c1 complex) that is part of the mitochondrial respiratory chain. The b-c1 complex mediates electron transfer from ubiquinol to cytochrome c. Contributes to the generation of a proton gradient across the mitochondrial membrane that is then used for ATP synthesis. The protein is Cytochrome b (mt:Cyt-b) of Brachionus plicatilis (Marine rotifer).